Reading from the N-terminus, the 396-residue chain is L-lactate dehydrogenase (396 aa).

The FMN hydroxy acid dehydrogenase domain occupies 1–380; that stretch reads MIISAASDYR…TQDSLVQGLG (380 aa). Position 24 (Tyr-24) interacts with substrate. FMN contacts are provided by Ser-106 and Gln-127. Residue Tyr-129 coordinates substrate. Thr-155 provides a ligand contact to FMN. Substrate is bound at residue Arg-164. Lys-251 lines the FMN pocket. The active-site Proton acceptor is the His-275. Substrate is bound at residue Arg-278. 306 to 330 provides a ligand contact to FMN; it reads DSGIRNGLDVVRMIALGADTVLLGR.

Belongs to the FMN-dependent alpha-hydroxy acid dehydrogenase family. Requires FMN as cofactor.

The protein localises to the cell inner membrane. The catalysed reaction is (S)-lactate + A = pyruvate + AH2. In terms of biological role, catalyzes the conversion of L-lactate to pyruvate. Is coupled to the respiratory chain. In Shigella dysenteriae serotype 1 (strain Sd197), this protein is L-lactate dehydrogenase.